We begin with the raw amino-acid sequence, 219 residues long: MATTIEVKTPAGTTDGSVELPAELFDVEANIALMHQVVTAQLAAKRQGTHSTKTRGEVSGGGKKPYRQKGTGRARQGSTRAPQFTGGGTVHGPQPRDYSQRTPKKMIAAALRGALSDRARNGRIHAVTELVEGQTPSTKSAKAFLSTLTERKQVLVVIGRADETSERSVRNLPGVHIISPDQLNTYDVLKADDVVFSVEALNAYINAQTARTEKEGASA.

Residues 43–100 (AAKRQGTHSTKTRGEVSGGGKKPYRQKGTGRARQGSTRAPQFTGGGTVHGPQPRDYSQ) form a disordered region.

Belongs to the universal ribosomal protein uL4 family. In terms of assembly, part of the 50S ribosomal subunit.

In terms of biological role, one of the primary rRNA binding proteins, this protein initially binds near the 5'-end of the 23S rRNA. It is important during the early stages of 50S assembly. It makes multiple contacts with different domains of the 23S rRNA in the assembled 50S subunit and ribosome. Forms part of the polypeptide exit tunnel. This chain is Large ribosomal subunit protein uL4, found in Mycobacterium sp. (strain JLS).